The sequence spans 80 residues: Translation initiation factor IF-1 (80 aa).

The 75-residue stretch at 6–80 (EKRKKEESDV…TSRGRIVYRK (75 aa)) folds into the S1-like domain.

Belongs to the IF-1 family. As to quaternary structure, component of the 30S ribosomal translation pre-initiation complex which assembles on the 30S ribosome in the order IF-2 and IF-3, IF-1 and N-formylmethionyl-tRNA(fMet); mRNA recruitment can occur at any time during PIC assembly.

It is found in the cytoplasm. One of the essential components for the initiation of protein synthesis. Stabilizes the binding of IF-2 and IF-3 on the 30S subunit to which N-formylmethionyl-tRNA(fMet) subsequently binds. Helps modulate mRNA selection, yielding the 30S pre-initiation complex (PIC). Upon addition of the 50S ribosomal subunit IF-1, IF-2 and IF-3 are released leaving the mature 70S translation initiation complex. The polypeptide is Translation initiation factor IF-1 (Deinococcus geothermalis (strain DSM 11300 / CIP 105573 / AG-3a)).